The sequence spans 762 residues: Alpha-xylosidase XylQ (762 aa).

The active-site Nucleophile is D414. E417 is a catalytic residue.

It belongs to the glycosyl hydrolase 31 family.

It is found in the cell membrane. It catalyses the reaction Hydrolysis of terminal, non-reducing alpha-D-xylose residues with release of alpha-D-xylose.. In terms of biological role, involved in the metabolism of isoprimeverose. Hydrolyzes isoprimeverose into equimolar amounts of glucose and xylose. In vitro, can also use p-nitrophenyl-alpha-D-xylopyranoside (alpha-p-NPX). This is Alpha-xylosidase XylQ from Lactiplantibacillus pentosus (Lactobacillus pentosus).